The sequence spans 435 residues: Transmembrane protease serine 4 (435 aa).

Residues 1-30 (MESDSGQPLNNRDIVPFRKPRRPQETFKKV) lie on the Cytoplasmic side of the membrane. Residues 31–51 (GIPIIAVLLSLIALVIVALLI) traverse the membrane as a helical; Signal-anchor for type II membrane protein segment. Over 52–435 (KVILDKYYFI…WIYNVRKSEM (384 aa)) the chain is Extracellular. The LDL-receptor class A domain occupies 59–101 (YFICGSPLTFIQRGQLCDGHLDCASGEDEEHCVKDFPEKPGVA). 8 cysteine pairs are disulfide-bonded: cysteine 62/cysteine 81, cysteine 75/cysteine 90, cysteine 125/cysteine 181, cysteine 138/cysteine 191, cysteine 194/cysteine 308, cysteine 228/cysteine 244, cysteine 354/cysteine 370, and cysteine 381/cysteine 408. Positions 102-202 (VRLSKDRSTL…DCGKSLKTPR (101 aa)) constitute an SRCR domain. N-linked (GlcNAc...) asparagine glycosylation is found at asparagine 128 and asparagine 176. The region spanning 203–432 (VVGGVEAPVD…YLNWIYNVRK (230 aa)) is the Peptidase S1 domain. Catalysis depends on charge relay system residues histidine 243 and aspartate 288. The Charge relay system role is filled by serine 385.

This sequence belongs to the peptidase S1 family. Post-translationally, proteolytically processed; probably by an autocatalytic mechanism.

The protein resides in the cell membrane. It is found in the secreted. Plasma membrane-anchored serine protease that directly induces processing of pro-uPA/PLAU into the active form through proteolytic activity. Seems to be capable of activating ENaC. The protein is Transmembrane protease serine 4 of Mus musculus (Mouse).